The following is a 307-amino-acid chain: Porphobilinogen deaminase (307 aa).

At C239 the chain carries S-(dipyrrolylmethanemethyl)cysteine.

This sequence belongs to the HMBS family. As to quaternary structure, monomer. It depends on dipyrromethane as a cofactor.

It catalyses the reaction 4 porphobilinogen + H2O = hydroxymethylbilane + 4 NH4(+). It participates in porphyrin-containing compound metabolism; protoporphyrin-IX biosynthesis; coproporphyrinogen-III from 5-aminolevulinate: step 2/4. Its function is as follows. Tetrapolymerization of the monopyrrole PBG into the hydroxymethylbilane pre-uroporphyrinogen in several discrete steps. The chain is Porphobilinogen deaminase from Campylobacter jejuni subsp. jejuni serotype O:6 (strain 81116 / NCTC 11828).